Here is a 260-residue protein sequence, read N- to C-terminus: Triosephosphate isomerase (260 aa).

11 to 13 (NWK) is a binding site for substrate. H103 acts as the Electrophile in catalysis. E175 serves as the catalytic Proton acceptor. Substrate contacts are provided by residues G181, S220, and 241 to 242 (GG).

Belongs to the triosephosphate isomerase family. As to quaternary structure, homodimer.

The protein localises to the cytoplasm. It carries out the reaction D-glyceraldehyde 3-phosphate = dihydroxyacetone phosphate. It functions in the pathway carbohydrate biosynthesis; gluconeogenesis. Its pathway is carbohydrate degradation; glycolysis; D-glyceraldehyde 3-phosphate from glycerone phosphate: step 1/1. Involved in the gluconeogenesis. Catalyzes stereospecifically the conversion of dihydroxyacetone phosphate (DHAP) to D-glyceraldehyde-3-phosphate (G3P). In Shewanella sp. (strain MR-4), this protein is Triosephosphate isomerase.